The chain runs to 623 residues: UvrABC system protein C (623 aa).

In terms of domain architecture, GIY-YIG spans 13–92; that stretch reads DKPGVYIMKN…IKKYKPRYNI (80 aa). Residues 204–239 form the UVR domain; the sequence is NDIIRELKEEMEKASMNLDFEKAADLRDKMLAAQKV.

This sequence belongs to the UvrC family. Interacts with UvrB in an incision complex.

It is found in the cytoplasm. The UvrABC repair system catalyzes the recognition and processing of DNA lesions. UvrC both incises the 5' and 3' sides of the lesion. The N-terminal half is responsible for the 3' incision and the C-terminal half is responsible for the 5' incision. This is UvrABC system protein C from Clostridium acetobutylicum (strain ATCC 824 / DSM 792 / JCM 1419 / IAM 19013 / LMG 5710 / NBRC 13948 / NRRL B-527 / VKM B-1787 / 2291 / W).